The chain runs to 100 residues: Small ribosomal subunit protein uS14c (100 aa).

Belongs to the universal ribosomal protein uS14 family. As to quaternary structure, part of the 30S ribosomal subunit.

Its subcellular location is the plastid. The protein localises to the chloroplast. In terms of biological role, binds 16S rRNA, required for the assembly of 30S particles. The protein is Small ribosomal subunit protein uS14c of Helianthus annuus (Common sunflower).